The following is a 194-amino-acid chain: Large ribosomal subunit protein bL9 (194 aa).

Over residues 166-184 (AENQAQADEQAGELAAAAA) the composition is skewed to low complexity. The tract at residues 166-194 (AENQAQADEQAGELAAAAAERGDMGGDEE) is disordered. Residues 185–194 (ERGDMGGDEE) show a composition bias toward basic and acidic residues.

The protein belongs to the bacterial ribosomal protein bL9 family.

Binds to the 23S rRNA. This Hyphomonas neptunium (strain ATCC 15444) protein is Large ribosomal subunit protein bL9.